The following is a 223-amino-acid chain: Urease accessory protein UreG (223 aa).

The interval 1–31 is disordered; it reads MAKHSHDHTHDHHDRPRRVRKPGEPLRIGVG. 32–39 contacts GTP; that stretch reads GPVGSGKT.

It belongs to the SIMIBI class G3E GTPase family. UreG subfamily. As to quaternary structure, homodimer. UreD, UreF and UreG form a complex that acts as a GTP-hydrolysis-dependent molecular chaperone, activating the urease apoprotein by helping to assemble the nickel containing metallocenter of UreC. The UreE protein probably delivers the nickel.

It is found in the cytoplasm. In terms of biological role, facilitates the functional incorporation of the urease nickel metallocenter. This process requires GTP hydrolysis, probably effectuated by UreG. The polypeptide is Urease accessory protein UreG (Mycobacterium marinum (strain ATCC BAA-535 / M)).